Here is a 288-residue protein sequence, read N- to C-terminus: Phosphatidylserine decarboxylase proenzyme (288 aa).

Residues D92, H149, and S254 each act as charge relay system; for autoendoproteolytic cleavage activity in the active site. S254 (schiff-base intermediate with substrate; via pyruvic acid; for decarboxylase activity) is an active-site residue. Position 254 is a pyruvic acid (Ser); by autocatalysis (S254).

The protein belongs to the phosphatidylserine decarboxylase family. PSD-B subfamily. Prokaryotic type I sub-subfamily. As to quaternary structure, heterodimer of a large membrane-associated beta subunit and a small pyruvoyl-containing alpha subunit. Pyruvate is required as a cofactor. Is synthesized initially as an inactive proenzyme. Formation of the active enzyme involves a self-maturation process in which the active site pyruvoyl group is generated from an internal serine residue via an autocatalytic post-translational modification. Two non-identical subunits are generated from the proenzyme in this reaction, and the pyruvate is formed at the N-terminus of the alpha chain, which is derived from the carboxyl end of the proenzyme. The autoendoproteolytic cleavage occurs by a canonical serine protease mechanism, in which the side chain hydroxyl group of the serine supplies its oxygen atom to form the C-terminus of the beta chain, while the remainder of the serine residue undergoes an oxidative deamination to produce ammonia and the pyruvoyl prosthetic group on the alpha chain. During this reaction, the Ser that is part of the protease active site of the proenzyme becomes the pyruvoyl prosthetic group, which constitutes an essential element of the active site of the mature decarboxylase.

It localises to the cell membrane. The enzyme catalyses a 1,2-diacyl-sn-glycero-3-phospho-L-serine + H(+) = a 1,2-diacyl-sn-glycero-3-phosphoethanolamine + CO2. Its pathway is phospholipid metabolism; phosphatidylethanolamine biosynthesis; phosphatidylethanolamine from CDP-diacylglycerol: step 2/2. Functionally, catalyzes the formation of phosphatidylethanolamine (PtdEtn) from phosphatidylserine (PtdSer). The protein is Phosphatidylserine decarboxylase proenzyme of Bordetella petrii (strain ATCC BAA-461 / DSM 12804 / CCUG 43448).